Consider the following 437-residue polypeptide: Lipopolysaccharide biosynthesis protein RfbH (437 aa).

This sequence belongs to the DegT/DnrJ/EryC1 family. The cofactor is pyridoxal 5'-phosphate.

The protein operates within bacterial outer membrane biogenesis; LPS O-antigen biosynthesis. This Salmonella typhimurium (strain LT2 / SGSC1412 / ATCC 700720) protein is Lipopolysaccharide biosynthesis protein RfbH (rfbH).